The primary structure comprises 274 residues: Thiazole synthase (274 aa).

Lysine 115 serves as the catalytic Schiff-base intermediate with DXP. 1-deoxy-D-xylulose 5-phosphate is bound by residues glycine 176, alanine 202 to glycine 203, and asparagine 224 to serine 225.

The protein belongs to the ThiG family. In terms of assembly, homotetramer. Forms heterodimers with either ThiH or ThiS.

The protein resides in the cytoplasm. The enzyme catalyses [ThiS sulfur-carrier protein]-C-terminal-Gly-aminoethanethioate + 2-iminoacetate + 1-deoxy-D-xylulose 5-phosphate = [ThiS sulfur-carrier protein]-C-terminal Gly-Gly + 2-[(2R,5Z)-2-carboxy-4-methylthiazol-5(2H)-ylidene]ethyl phosphate + 2 H2O + H(+). It participates in cofactor biosynthesis; thiamine diphosphate biosynthesis. In terms of biological role, catalyzes the rearrangement of 1-deoxy-D-xylulose 5-phosphate (DXP) to produce the thiazole phosphate moiety of thiamine. Sulfur is provided by the thiocarboxylate moiety of the carrier protein ThiS. In vitro, sulfur can be provided by H(2)S. The chain is Thiazole synthase from Psychrobacter cryohalolentis (strain ATCC BAA-1226 / DSM 17306 / VKM B-2378 / K5).